Reading from the N-terminus, the 397-residue chain is Heterogeneous nuclear ribonucleoprotein K homolog (397 aa).

Residues 1 to 41 (MMIKVGAAINGTDSPKAMKREHDNDDGDRTGRHKRPKTDGF) are disordered. Over residues 16–30 (KAMKREHDNDDGDRT) the composition is skewed to basic and acidic residues. 2 consecutive KH domains span residues 49 to 111 (KFEV…LKDV) and 124 to 189 (PCEV…IEEV). Residues 220-279 (GGFPGNMPAGGPPNNRGPAPQRGGQGPPGGPRSYGGAITQGGGQRSFEAGDFQQFRGGPG) are disordered. Residues 224–241 (GNMPAGGPPNNRGPAPQR) show a composition bias toward low complexity. The KH 3 domain maps to 316–379 (VTTAQVTIPS…QQIHSAQYLL (64 aa)).

As to quaternary structure, interacts with alg-1; the interaction is direct and may be strengthened through RNA-protein association. As to expression, expressed in gut, muscle, neuronal and hypodermal tissues. Highly expressed in the germline and oocytes.

It localises to the nucleus. The protein localises to the cytoplasm. Its function is as follows. RNA-binding protein which functions together with alg-1, a component of the miRNA loading complex, to modulate the processing and activity of specific miRNAs such as miR-58 and let-7 to regulate gene expression at the post-transcriptional level during embryonic, hypodermal and neuronal development. Promotes the lsy-6-mediated repression of cog-1 in uterine cells. In embryos, may play a role in the DNA damage response. This chain is Heterogeneous nuclear ribonucleoprotein K homolog, found in Caenorhabditis elegans.